A 367-amino-acid polypeptide reads, in one-letter code: MLRAASRAVGRAAVRSAQRSGTSVGRPLAMSRPPPPRAASGAPLRPATVLGTMEMGRRMDASASAASVRAFLERGHSELDTAFMYCDGQSENILGGLGLGLGSGDCTVKIATKANPWEGKSLKPDSIRSQLETSLKRLQCPRVDLFYLHAPDHSTPVEETLRACHQLHQEGKFVELGLSNYASWEVAEICTLCKSNGWILPTVYQGMYNATTRQVEAELLPCLRHFGLRFYAYNPLAGGLLTGKYKYEDKDGKQPVGRFFGNNWAETYRNRFWKEHHFEAIALVEKALQTTYGTNAPRMTSAALRWMYHHSQLQGTRGDAVILGMSSLEQLEQNLAATEEGPLEPAVVEAFDQAWNMVAHECPNYFR.

A compositionally biased stretch (low complexity) spans 1–31 (MLRAASRAVGRAAVRSAQRSGTSVGRPLAMS). The interval 1–45 (MLRAASRAVGRAAVRSAQRSGTSVGRPLAMSRPPPPRAASGAPLR) is disordered. The transit peptide at 1–46 (MLRAASRAVGRAAVRSAQRSGTSVGRPLAMSRPPPPRAASGAPLRP) directs the protein to the mitochondrion. Phosphoserine is present on Ser-40. Phosphothreonine is present on Thr-48. Residue Asp-80 participates in NADP(+) binding. The active-site Proton donor is the Tyr-85. At Lys-136 the chain carries N6-acetyllysine. Position 149 (His-149) interacts with substrate. NADP(+) contacts are provided by residues 179 to 180 (SN), Gln-205, 234 to 244 (NPLAGGLLTGK), and Arg-258. At Lys-244 the chain carries N6-succinyllysine. Residues Tyr-268 and Arg-271 each contribute to the substrate site. Residue 326–334 (SSLEQLEQN) participates in NADP(+) binding. Arg-367 is a binding site for substrate.

This sequence belongs to the aldo/keto reductase family. Aldo/keto reductase 2 subfamily. As to quaternary structure, homodimer. Expressed in liver, kidney, testis and brain with low levels in skeletal muscle, spleen, heart and lung.

It localises to the mitochondrion. The protein resides in the golgi apparatus. Its subcellular location is the cytoplasm. It catalyses the reaction 4-hydroxybutanoate + NADP(+) = succinate semialdehyde + NADPH + H(+). With respect to regulation, inhibited by citrate, succinate and tartrate. In terms of biological role, catalyzes the NADPH-dependent reduction of succinic semialdehyde to gamma-hydroxybutyrate. May have an important role in producing the neuromodulator gamma-hydroxybutyrate (GHB). Has broad substrate specificity. Can reduce the dialdehyde protein-binding form of aflatoxin B1 (AFB1) to the non-binding AFB1 dialcohol. May be involved in protection of liver against the toxic and carcinogenic effects of AFB1, a potent hepatocarcinogen. This is Aflatoxin B1 aldehyde reductase member 2 from Mus musculus (Mouse).